The primary structure comprises 495 residues: GTPase Der (495 aa).

EngA-type G domains lie at P3–E166 and I208–T381. Residues G9–S16, D56–I60, N118–D121, G214–S221, D261–V265, and N326–D329 each bind GTP. Residues K382–E466 enclose the KH-like domain.

This sequence belongs to the TRAFAC class TrmE-Era-EngA-EngB-Septin-like GTPase superfamily. EngA (Der) GTPase family. In terms of assembly, associates with the 50S ribosomal subunit.

Functionally, GTPase that plays an essential role in the late steps of ribosome biogenesis. The sequence is that of GTPase Der from Yersinia pseudotuberculosis serotype IB (strain PB1/+).